The sequence spans 213 residues: MDPIAENILSDLKKEVLREVTREKASRFSRIVKNESSAKNYAKAMFDIASDIGKIEVIKSDLNVVYSSLLVDNDIFNFFKSSFIDGHLRMRILKKIYADKILEETFNLIAILVERDMINILFAIIVEYENLCNEYYNIIVVKITTASNMTDTEDMNKLKDHITNMISDKDIHFTFNIDENIIGGVVIEVEDVVYDYSVRRLLTELKSSISENN.

Belongs to the ATPase delta chain family. F-type ATPases have 2 components, F(1) - the catalytic core - and F(0) - the membrane proton channel. F(1) has five subunits: alpha(3), beta(3), gamma(1), delta(1), epsilon(1). F(0) has three main subunits: a(1), b(2) and c(10-14). The alpha and beta chains form an alternating ring which encloses part of the gamma chain. F(1) is attached to F(0) by a central stalk formed by the gamma and epsilon chains, while a peripheral stalk is formed by the delta and b chains.

Its subcellular location is the cell inner membrane. Its function is as follows. F(1)F(0) ATP synthase produces ATP from ADP in the presence of a proton or sodium gradient. F-type ATPases consist of two structural domains, F(1) containing the extramembraneous catalytic core and F(0) containing the membrane proton channel, linked together by a central stalk and a peripheral stalk. During catalysis, ATP synthesis in the catalytic domain of F(1) is coupled via a rotary mechanism of the central stalk subunits to proton translocation. This protein is part of the stalk that links CF(0) to CF(1). It either transmits conformational changes from CF(0) to CF(1) or is implicated in proton conduction. The chain is ATP synthase subunit delta 2 from Brachyspira hyodysenteriae (strain ATCC 49526 / WA1).